Reading from the N-terminus, the 433-residue chain is Methylenetetrahydrofolate--tRNA-(uracil-5-)-methyltransferase TrmFO (433 aa).

7 to 12 (GGGLAG) contacts FAD.

It belongs to the MnmG family. TrmFO subfamily. It depends on FAD as a cofactor.

It localises to the cytoplasm. The catalysed reaction is uridine(54) in tRNA + (6R)-5,10-methylene-5,6,7,8-tetrahydrofolate + NADH + H(+) = 5-methyluridine(54) in tRNA + (6S)-5,6,7,8-tetrahydrofolate + NAD(+). It carries out the reaction uridine(54) in tRNA + (6R)-5,10-methylene-5,6,7,8-tetrahydrofolate + NADPH + H(+) = 5-methyluridine(54) in tRNA + (6S)-5,6,7,8-tetrahydrofolate + NADP(+). Functionally, catalyzes the folate-dependent formation of 5-methyl-uridine at position 54 (M-5-U54) in all tRNAs. The chain is Methylenetetrahydrofolate--tRNA-(uracil-5-)-methyltransferase TrmFO from Natranaerobius thermophilus (strain ATCC BAA-1301 / DSM 18059 / JW/NM-WN-LF).